A 380-amino-acid polypeptide reads, in one-letter code: Coiled-coil domain-containing protein 74B (380 aa).

Disordered stretches follow at residues 1–51 (MSGA…KRNL), 89–108 (LIMN…HLSR), and 128–202 (GGPS…DVPQ). Residues 34-44 (LRPQSPQLRQS) are compositionally biased toward polar residues. The stretch at 47 to 93 (QKRNLDLEKSLQFLQQQHSEMLAKLHEEIEHLKRENKDLRYKLIMNQ) forms a coiled coil. The span at 141-151 (RTHRPGGKHGR) shows a compositional bias: basic residues. Positions 165–182 (DSLSTSSFQSVKSISNSG) are enriched in polar residues.

This is Coiled-coil domain-containing protein 74B (CCDC74B) from Homo sapiens (Human).